The chain runs to 401 residues: MMTFQTLDDLDDGQRVLVRLDLNSPVEDGTVQDNRRFDRHAETVKELADRGFEVAVLAHQGRPGRDDFVSLDQHADILADHIDRDVDFVDETYGPQAIHDIADLDSGDVLVLENTRMCDDELPEEDPEVKAQTEFVKTLAGEFDAYINDAYSAAHRSHASLVGFPLVMDAYAGRVMETEYEANTAIAEKEFDGQVTMVVGGTKATDVIDVMTHLDEKVDDFLLGGIAGTVPAAAGHPVGYDIDDANLYDEQWEANSEKIESMLEDHRDQITLAVDLAYEDENDDRAEQAVDDIDEKRLSYLDVGSETLMEYSPIIRESEAVFGEGRAGMFEDERFSVGTAGVLEAIADTDCFSVVGGGDTSRAIEMYGMEEDEFGHVSIAGGAYIRALTRAQLVGVEVLQR.

Substrate is bound by residues 21 to 23, arginine 36, 59 to 62, arginine 116, and arginine 156; these read DLN and HQGR. ATP contacts are provided by residues glutamate 331 and 357–360; that span reads GGDT.

Belongs to the phosphoglycerate kinase family.

Its subcellular location is the cytoplasm. The enzyme catalyses (2R)-3-phosphoglycerate + ATP = (2R)-3-phospho-glyceroyl phosphate + ADP. Its pathway is carbohydrate degradation; glycolysis; pyruvate from D-glyceraldehyde 3-phosphate: step 2/5. This chain is Phosphoglycerate kinase (pgk), found in Haloarcula vallismortis (Halobacterium vallismortis).